The chain runs to 245 residues: U11/U12 small nuclear ribonucleoprotein 35 kDa protein (245 aa).

Positions 51–129 (LTLFVARLNL…HEIFVDYELE (79 aa)) constitute an RRM domain. Positions 146 to 162 (GKKESGQLRFGGRDRPF) are enriched in basic and acidic residues. The disordered stretch occupies residues 146–165 (GKKESGQLRFGGRDRPFRKP). Lys-172 participates in a covalent cross-link: Glycyl lysine isopeptide (Lys-Gly) (interchain with G-Cter in SUMO2). The segment at 173–222 (NDQFREGKRERRERSRSRERHWDSRMRDHHDRGREKRWQEREPARAWPEG) is disordered. Basic and acidic residues-rich tracts occupy residues 174 to 185 (DQFREGKRERRE) and 192 to 216 (RHWD…REPA).

As to quaternary structure, component of the U11/U12 snRNPs that are part of the U12-type spliceosome.

It localises to the nucleus. This Bos taurus (Bovine) protein is U11/U12 small nuclear ribonucleoprotein 35 kDa protein (SNRNP35).